We begin with the raw amino-acid sequence, 456 residues long: UDP-N-acetylglucosamine 1-carboxyvinyltransferase (456 aa).

34 to 35 (KN) contacts phosphoenolpyruvate. R104 is a UDP-N-acetyl-alpha-D-glucosamine binding site. Catalysis depends on C128, which acts as the Proton donor. Residue C128 is modified to 2-(S-cysteinyl)pyruvic acid O-phosphothioketal. Residues D319 and I341 each contribute to the UDP-N-acetyl-alpha-D-glucosamine site.

Belongs to the EPSP synthase family. MurA subfamily.

It is found in the cytoplasm. It catalyses the reaction phosphoenolpyruvate + UDP-N-acetyl-alpha-D-glucosamine = UDP-N-acetyl-3-O-(1-carboxyvinyl)-alpha-D-glucosamine + phosphate. It functions in the pathway cell wall biogenesis; peptidoglycan biosynthesis. In terms of biological role, cell wall formation. Adds enolpyruvyl to UDP-N-acetylglucosamine. The protein is UDP-N-acetylglucosamine 1-carboxyvinyltransferase of Prochlorococcus marinus (strain MIT 9312).